We begin with the raw amino-acid sequence, 122 residues long: Large ribosomal subunit protein uL14 (122 aa).

Belongs to the universal ribosomal protein uL14 family. As to quaternary structure, part of the 50S ribosomal subunit. Forms a cluster with proteins L3 and L19. In the 70S ribosome, L14 and L19 interact and together make contacts with the 16S rRNA in bridges B5 and B8.

Binds to 23S rRNA. Forms part of two intersubunit bridges in the 70S ribosome. The protein is Large ribosomal subunit protein uL14 of Pseudothermotoga lettingae (strain ATCC BAA-301 / DSM 14385 / NBRC 107922 / TMO) (Thermotoga lettingae).